The following is a 116-amino-acid chain: Flagellar transcriptional regulator FlhD (116 aa).

This sequence belongs to the FlhD family. In terms of assembly, homodimer; disulfide-linked. Forms a heterohexamer composed of two FlhC and four FlhD subunits. Each FlhC binds a FlhD dimer, forming a heterotrimer, and a hexamer assembles by dimerization of two heterotrimers.

The protein localises to the cytoplasm. Functionally, functions in complex with FlhC as a master transcriptional regulator that regulates transcription of several flagellar and non-flagellar operons by binding to their promoter region. Activates expression of class 2 flagellar genes, including fliA, which is a flagellum-specific sigma factor that turns on the class 3 genes. Also regulates genes whose products function in a variety of physiological pathways. The sequence is that of Flagellar transcriptional regulator FlhD from Salmonella arizonae (strain ATCC BAA-731 / CDC346-86 / RSK2980).